The following is a 420-amino-acid chain: Protein-lysine 6-oxidase (420 aa).

The first 27 residues, 1–27 (MRCAPPGLLLAQLHACIFWSGLWPAGC), serve as a signal peptide directing secretion. Residues 28 to 171 (QSPPAAWRQR…RPGREDVMVG (144 aa)) constitute a propeptide, removed by BMP1. The segment at 54 to 177 (AQYQPPRRRQ…VMVGDDPYSP (124 aa)) is disordered. An N-linked (GlcNAc...) asparagine glycan is attached at Asn78. Over residues 82–92 (PRAAAAAAARP) the composition is skewed to low complexity. The segment covering 93 to 105 (QPEPQPQAQPQPR) has biased composition (pro residues). Basic residues-rich tracts occupy residues 107–119 (RSSR…RRHW) and 134–147 (APRR…SRRR). Tyr190 carries the sulfotyrosine modification. Positions 216–420 (PDLVPDPYYI…YASGCTISPY (205 aa)) are lysyl-oxidase like. Cystine bridges form between Cys241–Cys247, Cys294–Cys343, Cys327–Cys333, Cys354–Cys364, and Cys401–Cys415. His295, His297, and His299 together coordinate Cu cation. Positions 323 to 358 (KASFCLEDTSCDYGYYRRYACTAHTQGLSPGCYDTY) form a cross-link, lysine tyrosylquinone (Lys-Tyr). Tyr358 is subject to 2',4',5'-topaquinone.

Belongs to the lysyl oxidase family. It depends on Cu cation as a cofactor. Lysine tyrosylquinone residue is required as a cofactor. Post-translationally, the lysine tyrosylquinone cross-link (LTQ) is generated by condensation of the epsilon-amino group of a lysine with a topaquinone produced by oxidation of tyrosine. In terms of processing, proteolytically cleaved by BMP1 which removes the propeptide. Also proteolytically cleaved by ADAMTS2 and ADAMTS14, but not by ADAMTS3, at an additional cleavage site downstream of the BMP1 cleavage site. The propeptide plays a role in directing the deposition of this enzyme to elastic fibers, via interaction with tropoelastin. Cleavage by BMP1 to remove the propeptide does not increase enzymatic activity but increases binding to collagen. Cleavage by ADAMTS2 produces a form with reduced collagen-binding activity. Sulfated at Tyr-190 and also at either Tyr-186 or Tyr-187 which enhances binding to collagen.

It is found in the secreted. The protein localises to the extracellular space. The enzyme catalyses L-lysyl-[protein] + O2 + H2O = (S)-2-amino-6-oxohexanoyl-[protein] + H2O2 + NH4(+). Responsible for the post-translational oxidative deamination of peptidyl lysine residues in precursors to fibrous collagen and elastin. Its function is as follows. In addition to cross linking of extracellular matrix proteins, it may have a direct role in tumor suppression. The sequence is that of Protein-lysine 6-oxidase (LOX) from Gallus gallus (Chicken).